The chain runs to 120 residues: uncharacterized protein (120 aa).

The Nudix hydrolase domain maps to 29–120; sequence QRQAAVLVPI…QVTPVVGIIP (92 aa). A Nudix box motif is present at residues 67–89; sequence GAVDNSDATLIAAALREAQEEVA. Glu83 and Glu87 together coordinate Mg(2+).

Belongs to the Nudix hydrolase family. PCD1 subfamily. It depends on Mn(2+) as a cofactor. Requires Mg(2+) as cofactor.

In terms of biological role, probably mediates the hydrolysis of some nucleoside diphosphate derivatives. This is an uncharacterized protein from Klebsiella aerogenes (Enterobacter aerogenes).